Reading from the N-terminus, the 636-residue chain is p-hydroxybenzoate-m-hydroxylase (636 aa).

Residues 11–40 (DIVIVGAGPVGILLSLCMSRWGYKVKHIDN), 242–244 (RLY), tyrosine 290, and aspartate 311 contribute to the FAD site. The chain crosses the membrane as a helical span at residues 12–33 (IVIVGAGPVGILLSLCMSRWGY). N-linked (GlcNAc...) asparagine glycosylation is present at asparagine 573.

The protein belongs to the PheA/TfdB FAD monooxygenase family. FAD serves as cofactor.

The protein localises to the membrane. The catalysed reaction is 4-hydroxybenzoate + NADH + O2 + H(+) = 3,4-dihydroxybenzoate + NAD(+) + H2O. It catalyses the reaction 4-hydroxybenzoate + NADPH + O2 + H(+) = 3,4-dihydroxybenzoate + NADP(+) + H2O. In terms of biological role, FAD-dependent monooxygenase; part of the benzoic acid degradation pathway also known as the protocatechuic acid pathway. Benzoic acid debradation begins with the conversion of benzoic acid into 4-hydroxybenzoic acid through hydroxylation by the benzoate-4-monooxygenase bphA, and its partner NADPH-cytochrome P450 reductase cprA which act as a mediator in electron donation from NADPH. 4-Hydroxybenzoic acid is then converted into 3,4-dihydroxybenzoic acid (also called protocatechuic acid) by the p-hydroxybenzoate-m-hydroxylase phhA. Protocatechuic acid is converted into 3-carboxy-cis,cis-muconic acid by the intradiol ring-cleavage dioxygenase prcA, which is further metabolized through the 3-oxoadipate pathway to finally enter the tricarboxylic acid cycle (TCA). The chain is p-hydroxybenzoate-m-hydroxylase from Emericella nidulans (strain FGSC A4 / ATCC 38163 / CBS 112.46 / NRRL 194 / M139) (Aspergillus nidulans).